The following is a 305-amino-acid chain: Tyrosine recombinase XerD (305 aa).

The 86-residue stretch at 3–88 (PADASVIERF…TLRAFYGLCL (86 aa)) folds into the Core-binding (CB) domain. A Tyr recombinase domain is found at 109-299 (SLPKALTESQ…ARQHLQKLHA (191 aa)). Active-site residues include Arg-149, Lys-173, His-251, Arg-254, and His-277. The O-(3'-phospho-DNA)-tyrosine intermediate role is filled by Tyr-286.

The protein belongs to the 'phage' integrase family. XerD subfamily. In terms of assembly, forms a cyclic heterotetrameric complex composed of two molecules of XerC and two molecules of XerD.

The protein resides in the cytoplasm. Site-specific tyrosine recombinase, which acts by catalyzing the cutting and rejoining of the recombining DNA molecules. The XerC-XerD complex is essential to convert dimers of the bacterial chromosome into monomers to permit their segregation at cell division. It also contributes to the segregational stability of plasmids. This chain is Tyrosine recombinase XerD, found in Xanthomonas axonopodis pv. citri (strain 306).